The chain runs to 305 residues: Putative E3 ubiquitin-protein ligase SINAT1 (305 aa).

An RING-type zinc finger spans residues 57–93 (CPVCTNLMYPPIHQCPNGHTLCSSCKLRVQNTCPTCR). Residues 107–300 (VAESLEVPCR…EELKLRVTGR (194 aa)) are SBD. The SIAH-type zinc-finger motif lies at 110 to 170 (SLEVPCRYQN…LVDHLKDDHK (61 aa)). Residues Cys-115, Cys-122, His-134, Cys-138, Cys-145, Cys-152, His-164, and His-169 each contribute to the Zn(2+) site.

This sequence belongs to the SINA (Seven in absentia) family. Interacts with SINAT6. Interacts with ATG6 and TRAF1A. Interacts with WAV3. Interacts with FREE1. Interacts with ELC/VPS23A.

The protein resides in the endosome. It localises to the multivesicular body. Its subcellular location is the cytoplasmic vesicle. It is found in the autophagosome. It carries out the reaction S-ubiquitinyl-[E2 ubiquitin-conjugating enzyme]-L-cysteine + [acceptor protein]-L-lysine = [E2 ubiquitin-conjugating enzyme]-L-cysteine + N(6)-ubiquitinyl-[acceptor protein]-L-lysine.. Its pathway is protein modification; protein ubiquitination. In terms of biological role, E3 ubiquitin-protein ligase that mediates ubiquitination and subsequent proteasomal degradation of target proteins. E3 ubiquitin ligases accept ubiquitin from an E2 ubiquitin-conjugating enzyme in the form of a thioester and then directly transfers the ubiquitin to targeted substrates. It probably triggers the ubiquitin-mediated degradation of different substrates. Mediates the proteasomal-dependent degradation of ATG6, a component of the autophagosome complex. Requires TRAF1A/MUSE14 and TRAF1B/MUSE13 to target ATG6 for ubiquitination and subsequent regulation of autophagosome assembly. Modulates directly the ubiquitination and proteasomal-dependent degradation of FREE1, a component of the ESCRT-I complex. Modulates directly the ubiquitination and proteasomal-dependent degradation of ELC/VPS23A, a component of the ESCRT-I complex. The chain is Putative E3 ubiquitin-protein ligase SINAT1 from Arabidopsis thaliana (Mouse-ear cress).